We begin with the raw amino-acid sequence, 129 residues long: MNSAPPSRAHQAAQRRGKVAEGLAALWLRLKGYGILAKGLKSGRGSGAGEVDLVARRGDLVAFVEVKSRATLDQAIESLTPFQRQRIERAAAAFLARRPELASCGVRFDMVLVAPWRLPRHIPDAWRID.

The protein belongs to the UPF0102 family.

The polypeptide is UPF0102 protein amb4503 (Paramagnetospirillum magneticum (strain ATCC 700264 / AMB-1) (Magnetospirillum magneticum)).